The sequence spans 59 residues: Putative potassium channel toxin Ts24 (59 aa).

A signal peptide spans Met-1–Gln-22. 3 disulfides stabilise this stretch: Cys-29–Cys-50, Cys-35–Cys-55, and Cys-39–Cys-57.

Belongs to the short scorpion toxin superfamily. Potassium channel inhibitor family. Alpha-KTx 04 subfamily. As to expression, expressed by the venom gland.

It localises to the secreted. Potently blocks Kv1.1/KCNA1 (85%), Kv1.2/KCNA2 (91%), Kv1.3/KCNA3 (89%), Kv1.6/KCNA6 (94%), and Shaker (97%). The protein is Putative potassium channel toxin Ts24 of Tityus serrulatus (Brazilian scorpion).